The chain runs to 911 residues: Translation initiation factor IF-2 (911 aa).

Composition is skewed to basic and acidic residues over residues 80 to 94 and 101 to 113; these read LEEQSRKTYEKEQQL and RPERAAAKPRTEV. 3 disordered regions span residues 80–142, 153–172, and 195–309; these read LEEQ…VSEP, VKSPVEETSETVAEKNDVEG, and SSLG…KMRK. Positions 214-256 are enriched in basic and acidic residues; the sequence is KEQADELKDEFDIKAKEGGKEREAGGESRKPVKKGSEETKKTT. A compositionally biased stretch (basic residues) spans 262-272; the sequence is AKKKKGKKKKK. A compositionally biased stretch (basic and acidic residues) spans 273-284; that stretch reads PEVDEKTIEKNI. The span at 286–300 shows a compositional bias: low complexity; that stretch reads STISGMDDTSGSGSS. A tr-type G domain is found at 408-578; sequence IRPPVVTIMG…LTEAEIRELK (171 aa). The interval 417-424 is G1; that stretch reads GHVDHGKT. Position 417-424 (417-424) interacts with GTP; sequence GHVDHGKT. The tract at residues 442–446 is G2; it reads GITQH. The tract at residues 464–467 is G3; sequence DTPG. Residues 464–468 and 518–521 contribute to the GTP site; these read DTPGH and NKID. The G4 stretch occupies residues 518 to 521; it reads NKID. A G5 region spans residues 554–556; the sequence is SAK.

It belongs to the TRAFAC class translation factor GTPase superfamily. Classic translation factor GTPase family. IF-2 subfamily.

It localises to the cytoplasm. Its function is as follows. One of the essential components for the initiation of protein synthesis. Protects formylmethionyl-tRNA from spontaneous hydrolysis and promotes its binding to the 30S ribosomal subunits. Also involved in the hydrolysis of GTP during the formation of the 70S ribosomal complex. This chain is Translation initiation factor IF-2, found in Chlorobium phaeobacteroides (strain BS1).